Consider the following 291-residue polypeptide: MSVSANLVKQLRERTGSGMMECKKALVEVDGDLEAAAELMRKKGLAKADKKADRVAAEGRVVAARSEDGKSGVLVEVNSETDFVGNGDEFRAFAESVAQRALDSKVEDLDSLLASEVDGKSVETLRQEMVAQLGENIEVRRFIRYAGDHQVAQYLHGARIGVMVEVQGGDEQLGRDLAMHIAASSPVCVSPDDVPADQLSSEKEVLLAQARESGKPEEIVEKMVEGRLKKHLSEITLLGQPFVKDPDQTVGDLLKAKGAEVTRFARYEVGEGKEKKDESFADEVMAQVRDS.

The interval 81 to 84 is involved in Mg(2+) ion dislocation from EF-Tu; it reads TDFV. The interval 271–291 is disordered; sequence EGKEKKDESFADEVMAQVRDS.

The protein belongs to the EF-Ts family.

It localises to the cytoplasm. Associates with the EF-Tu.GDP complex and induces the exchange of GDP to GTP. It remains bound to the aminoacyl-tRNA.EF-Tu.GTP complex up to the GTP hydrolysis stage on the ribosome. In Halorhodospira halophila (strain DSM 244 / SL1) (Ectothiorhodospira halophila (strain DSM 244 / SL1)), this protein is Elongation factor Ts.